We begin with the raw amino-acid sequence, 258 residues long: MATVKLSFLQHICKLTGLSRSGRKDELLRRIVDSPIYPTSRVLGIDLGIKNFSYCFASQNEDSKVIIHNWSVENLTEKNGLDIQWTEDFQPSSMADLSIQLFNTLHEKFNPHVILMERQRYRSGIATIPEWTLRVNMLESMLYALHYAEKRNSIEQKIQYPFLLSLSPKSTYSYWASVLNTKASFSKKKSRVQMVKELIDGQKILFENEEALYKWNNGSRVEFKKDDMADSALIASGWMRWQAQLKHYRNFCKQFLKQ.

In terms of domain architecture, SAP spans 1–35 (MATVKLSFLQHICKLTGLSRSGRKDELLRRIVDSP). Residues aspartate 46 and aspartate 230 each contribute to the Mg(2+) site.

Homodimer.

Its subcellular location is the mitochondrion. It carries out the reaction Endonucleolytic cleavage at a junction such as a reciprocal single-stranded crossover between two homologous DNA duplexes (Holliday junction).. Capable of resolving Holliday junctions. Specific for 4-way junctions. Seems to be important for the maintenance of mitochondrial DNA. Cleaves fixed junctions at the point of strand exchange. Cleaves after 5'-CT-3' and 5'-TT-3' sequences. This is Cruciform cutting endonuclease 1, mitochondrial (cce1) from Schizosaccharomyces pombe (strain 972 / ATCC 24843) (Fission yeast).